A 349-amino-acid chain; its full sequence is Threonine-rich protein (349 aa).

An N-terminal signal peptide occupies residues 1–19 (MKGLTLACIAATVVAASHA). An N-linked (GlcNAc...) asparagine glycan is attached at Asn257. A disordered region spans residues 300 to 326 (QPDVSPMSVRKRRQAESAEEDDDLVGD). The span at 316 to 326 (SAEEDDDLVGD) shows a compositional bias: acidic residues. Residues 316 to 349 (SAEEDDDLVGDMEDLKELEQEIQEALEEVEKLDV) adopt a coiled-coil conformation.

In terms of tissue distribution, component of the acid-insoluble and acid-soluble organic matrix of calcified layers of the shell (at protein level).

Its subcellular location is the secreted. In Lottia gigantea (Giant owl limpet), this protein is Threonine-rich protein.